A 334-amino-acid chain; its full sequence is Holliday junction branch migration complex subunit RuvB (334 aa).

The segment at 1–182 (MNERMVDQSM…FGVHLRLEYY (182 aa)) is large ATPase domain (RuvB-L). ATP-binding positions include L21, R22, G63, K66, T67, T68, 129–131 (EDF), R172, Y182, and R219. T67 serves as a coordination point for Mg(2+). The tract at residues 183-253 (NESDLKEIII…TTKHALGLLQ (71 aa)) is small ATPAse domain (RuvB-S). Positions 256-334 (QHGLDYIDHK…HFAKSNEERE (79 aa)) are head domain (RuvB-H). DNA contacts are provided by R292, R311, and R316.

The protein belongs to the RuvB family. In terms of assembly, homohexamer. Forms an RuvA(8)-RuvB(12)-Holliday junction (HJ) complex. HJ DNA is sandwiched between 2 RuvA tetramers; dsDNA enters through RuvA and exits via RuvB. An RuvB hexamer assembles on each DNA strand where it exits the tetramer. Each RuvB hexamer is contacted by two RuvA subunits (via domain III) on 2 adjacent RuvB subunits; this complex drives branch migration. In the full resolvosome a probable DNA-RuvA(4)-RuvB(12)-RuvC(2) complex forms which resolves the HJ.

It is found in the cytoplasm. The enzyme catalyses ATP + H2O = ADP + phosphate + H(+). Functionally, the RuvA-RuvB-RuvC complex processes Holliday junction (HJ) DNA during genetic recombination and DNA repair, while the RuvA-RuvB complex plays an important role in the rescue of blocked DNA replication forks via replication fork reversal (RFR). RuvA specifically binds to HJ cruciform DNA, conferring on it an open structure. The RuvB hexamer acts as an ATP-dependent pump, pulling dsDNA into and through the RuvAB complex. RuvB forms 2 homohexamers on either side of HJ DNA bound by 1 or 2 RuvA tetramers; 4 subunits per hexamer contact DNA at a time. Coordinated motions by a converter formed by DNA-disengaged RuvB subunits stimulates ATP hydrolysis and nucleotide exchange. Immobilization of the converter enables RuvB to convert the ATP-contained energy into a lever motion, pulling 2 nucleotides of DNA out of the RuvA tetramer per ATP hydrolyzed, thus driving DNA branch migration. The RuvB motors rotate together with the DNA substrate, which together with the progressing nucleotide cycle form the mechanistic basis for DNA recombination by continuous HJ branch migration. Branch migration allows RuvC to scan DNA until it finds its consensus sequence, where it cleaves and resolves cruciform DNA. This chain is Holliday junction branch migration complex subunit RuvB, found in Staphylococcus aureus (strain MRSA252).